The sequence spans 425 residues: Histidine--tRNA ligase (425 aa).

Belongs to the class-II aminoacyl-tRNA synthetase family. In terms of assembly, homodimer.

Its subcellular location is the cytoplasm. The enzyme catalyses tRNA(His) + L-histidine + ATP = L-histidyl-tRNA(His) + AMP + diphosphate + H(+). In Listeria monocytogenes serovar 1/2a (strain ATCC BAA-679 / EGD-e), this protein is Histidine--tRNA ligase.